Consider the following 344-residue polypeptide: Anamorsin homolog 1 (344 aa).

An N-terminal SAM-like domain region spans residues 1-169; it reads MANNVGVLLA…DTGSVFQIRK (169 aa). A linker region spans residues 170–233; sequence KVSNQNGNFR…EDDLLTEEDL (64 aa). Positions 244, 251, 254, and 256 each coordinate [2Fe-2S] cluster. The tract at residues 244-256 is fe-S binding site A; it reads CAPTKKACKNCTC. Positions 282, 285, 293, and 296 each coordinate [4Fe-4S] cluster. 2 short sequence motifs (cx2C motif) span residues 282-285 and 293-296; these read CGSC and CAGC. Residues 282–296 are fe-S binding site B; the sequence is CGSCGLGDAFRCAGC.

The protein belongs to the anamorsin family. Monomer. It depends on [2Fe-2S] cluster as a cofactor. The cofactor is [4Fe-4S] cluster.

It is found in the cytoplasm. Its subcellular location is the mitochondrion intermembrane space. Functionally, component of the cytosolic iron-sulfur (Fe-S) protein assembly (CIA) machinery. Required for the maturation of extramitochondrial Fe-S proteins. Part of an electron transfer chain functioning in an early step of cytosolic Fe-S biogenesis, facilitating the de novo assembly of a [4Fe-4S] cluster on the cytosolic Fe-S scaffold complex. Electrons are transferred from NADPH via a FAD- and FMN-containing diflavin oxidoreductase. Together with the diflavin oxidoreductase, also required for the assembly of the diferric tyrosyl radical cofactor of ribonucleotide reductase (RNR), probably by providing electrons for reduction during radical cofactor maturation in the catalytic small subunit. In Physcomitrium patens (Spreading-leaved earth moss), this protein is Anamorsin homolog 1.